We begin with the raw amino-acid sequence, 810 residues long: F-BAR domain only protein 2 (810 aa).

The 248-residue stretch at 3 to 250 (MAYFVENFWG…NMANTTVESL (248 aa)) folds into the F-BAR domain. The segment at 3–274 (MAYFVENFWG…PGLIEFEECD (272 aa)) is mediates dimerization and binding to membranes enriched in Pi(4,5)-P2 and induces their tubulation. Positions 87-156 (HLDLVRKLQE…CVEQERLKKE (70 aa)) form a coiled coil. A Glycyl lysine isopeptide (Lys-Gly) (interchain with G-Cter in SUMO2) cross-link involves residue Lys-297. Residues 301 to 352 (DAESVECPDADSLNIPDVDEEGYSIKPETNQNDTKENHFYSSSDSDSEDEEP) are disordered. Ser-312 is modified (phosphoserine). The residue at position 385 (Thr-385) is a Phosphothreonine. Phosphoserine is present on residues Ser-387, Ser-394, and Ser-403. Positions 404–537 (NEELTKSKPS…VSRGPSPVSL (134 aa)) are disordered. Over residues 433–456 (PSLDSSSSSSLTSSSSARPTTPLS) the composition is skewed to low complexity. Ser-488, Ser-493, Ser-496, Ser-508, Ser-510, Ser-511, and Ser-533 each carry phosphoserine. The segment covering 502 to 521 (PLARAESSSSISSSASLSAA) has biased composition (low complexity). Residues 521-810 (ANTPTVGVSR…FATGRYLADC (290 aa)) form a mediates interaction with DAB2, EPS15, EPS15R and ITSN1 region. The 268-residue stretch at 542–809 (TLPVAVALTE…RFATGRYLAD (268 aa)) folds into the MHD domain.

Belongs to the FCHO family. As to quaternary structure, homodimer; disulfide-linked. May form homotetramer. Interacts with AP2A1. Interacts with EPS15, EPS15R, ITSN1 and ITSN2; recruit those scaffolding proteins which in turn may interact with the adaptor protein complex AP-2 at the plasma membrane. Interacts with DAB2 (via DPF motifs); mediates LDL receptor/LDLR endocytosis. In terms of processing, ubiquitinated. Mainly undergoes monoubiquitination but also polyubiquitination.

It is found in the membrane. Its subcellular location is the clathrin-coated pit. In terms of biological role, functions in an early step of clathrin-mediated endocytosis. Has both a membrane binding/bending activity and the ability to recruit proteins essential to the formation of functional clathrin-coated pits. Has a lipid-binding activity with a preference for membranes enriched in phosphatidylserine and phosphoinositides (Pi(4,5) biphosphate) like the plasma membrane. Its membrane-bending activity might be important for the subsequent action of clathrin and adaptors in the formation of clathrin-coated vesicles. Involved in adaptor protein complex AP-2-dependent endocytosis of the transferrin receptor, it also functions in the AP-2-independent endocytosis of the LDL receptor. In Homo sapiens (Human), this protein is F-BAR domain only protein 2 (FCHO2).